Here is a 279-residue protein sequence, read N- to C-terminus: MMSPGSSHSAMISEMSGLTITQVNLSHAPYNMIAGAIGAVVLTILALVFKDYGEQHRQAYLAEQKESEIKVIEGVNVLYALAPLIPLVILVIGGTSLQQVPGLEWTKMGVPQAMLIGAIYGIIVTRISPVKITEEFFNGMGNSYANVLGIIIAASVFVAGLKSTGAVDAAISFLKESNEFVRWGATIGPFLMGLITGSGDAAAIAFNTAVTPHAVELGYTHVNLGMAAAIAGAIGRTASPIAGVTIVCAGLAMVSPVEMVKRTAPGMILAVLFLALFML.

The next 6 helical transmembrane spans lie at 29–49, 77–97, 105–125, 147–167, 186–206, and 240–260; these read PYNMIAGAIGAVVLTILALVF, VLYALAPLIPLVILVIGGTSL, WTKMGVPQAMLIGAIYGIIVT, VLGIIIAASVFVAGLKSTGAV, TIGPFLMGLITGSGDAAAIAF, and PIAGVTIVCAGLAMVSPVEMV.

Belongs to the DcuC/DcuD transporter (TC 2.A.61) family.

Its subcellular location is the cell membrane. This is an uncharacterized protein from Haemophilus influenzae (strain ATCC 51907 / DSM 11121 / KW20 / Rd).